The chain runs to 320 residues: Delta(7)-sterol 5(6)-desaturase erg3C (320 aa).

Helical transmembrane passes span 43-63 (VISILVLTQLGATSLYLFFSA), 91-111 (SSLSAIPFINILTLPWFLAEV), and 127-147 (PWLVVSSILYMAFNDIGIYWI). The 150-residue stretch at 134–283 (ILYMAFNDIG…FTWADAYFGS (150 aa)) folds into the Fatty acid hydroxylase domain. A Histidine box-1 motif is present at residues 148-152 (HRLEH). The Histidine box-2 motif lies at 161–165 (HKPHH). The helical transmembrane segment at 224 to 244 (YMVLFAAVQIWTILIHDGDMI) threads the bilayer. The Histidine box-3 motif lies at 259-263 (HTLHH).

The protein belongs to the sterol desaturase family. It depends on Fe cation as a cofactor.

It is found in the endoplasmic reticulum membrane. Functionally, delta(7)-sterol 5(6)-desaturase; part of the third module of ergosterol biosynthesis pathway that includes the late steps of the pathway. Erg3C is a minor delta(7)-sterol 5(6)-desaturase within the ergosterol pathway, erg3B being the major one. The third module or late pathway involves the ergosterol synthesis itself through consecutive reactions that mainly occur in the endoplasmic reticulum (ER) membrane. Firstly, the squalene synthase erg9 catalyzes the condensation of 2 farnesyl pyrophosphate moieties to form squalene, which is the precursor of all steroids. Squalene synthase is crucial for balancing the incorporation of farnesyl diphosphate (FPP) into sterol and nonsterol isoprene synthesis. Secondly, squalene is converted into lanosterol by the consecutive action of the squalene epoxidase erg1 and the lanosterol synthase erg7. Then, the delta(24)-sterol C-methyltransferase erg6 methylates lanosterol at C-24 to produce eburicol. Eburicol is the substrate of the sterol 14-alpha demethylase encoded by cyp51A and cyp51B, to yield 4,4,24-trimethyl ergosta-8,14,24(28)-trienol. The C-14 reductase erg24 then reduces the C14=C15 double bond which leads to 4,4-dimethylfecosterol. A sequence of further demethylations at C-4, involving the C-4 demethylation complex containing the C-4 methylsterol oxidases erg25A or erg25B, the sterol-4-alpha-carboxylate 3-dehydrogenase erg26 and the 3-keto-steroid reductase erg27, leads to the production of fecosterol via 4-methylfecosterol. The C-8 sterol isomerase erg2 then catalyzes the reaction which results in unsaturation at C-7 in the B ring of sterols and thus converts fecosterol to episterol. The sterol-C5-desaturase erg3B then catalyzes the introduction of a C-5 double bond in the B ring to produce 5-dehydroepisterol. The 2 other sterol-C5-desaturases, erg3A and erg3C, seem to be less important in ergosterol biosynthesis. The C-22 sterol desaturase erg5 further converts 5-dehydroepisterol into ergosta-5,7,22,24(28)-tetraen-3beta-ol by forming the C-22(23) double bond in the sterol side chain. Finally, ergosta-5,7,22,24(28)-tetraen-3beta-ol is substrate of the C-24(28) sterol reductases erg4A and erg4B to produce ergosterol. Possible alternative sterol biosynthetic pathways might exist from fecosterol to ergosterol, depending on the activities of the erg3 isoforms. The polypeptide is Delta(7)-sterol 5(6)-desaturase erg3C (Aspergillus fumigatus (strain ATCC MYA-4609 / CBS 101355 / FGSC A1100 / Af293) (Neosartorya fumigata)).